A 353-amino-acid chain; its full sequence is Protein-glutamate methylesterase/protein-glutamine glutaminase 3 (353 aa).

One can recognise a Response regulatory domain in the interval 3 to 120 (KVLIADDSAL…SSSSDMKKVA (118 aa)). D54 carries the post-translational modification 4-aspartylphosphate. The region spanning 158–353 (PRPGREVTKA…AREIIRAVNR (196 aa)) is the CheB-type methylesterase domain. Active-site residues include S173, H200, and D296.

Belongs to the CheB family. Post-translationally, phosphorylated by CheA. Phosphorylation of the N-terminal regulatory domain activates the methylesterase activity.

It localises to the cytoplasm. The catalysed reaction is [protein]-L-glutamate 5-O-methyl ester + H2O = L-glutamyl-[protein] + methanol + H(+). It carries out the reaction L-glutaminyl-[protein] + H2O = L-glutamyl-[protein] + NH4(+). Its function is as follows. Involved in chemotaxis. Part of a chemotaxis signal transduction system that modulates chemotaxis in response to various stimuli. Catalyzes the demethylation of specific methylglutamate residues introduced into the chemoreceptors (methyl-accepting chemotaxis proteins or MCP) by CheR. Also mediates the irreversible deamidation of specific glutamine residues to glutamic acid. This is Protein-glutamate methylesterase/protein-glutamine glutaminase 3 from Syntrophomonas wolfei subsp. wolfei (strain DSM 2245B / Goettingen).